Consider the following 33-residue polypeptide: Photosystem II reaction center protein Psb30 (33 aa).

The chain crosses the membrane as a helical span at residues 5–25 (VIAQLTVLALIVISGPLVIAL).

This sequence belongs to the Psb30/Ycf12 family. As to quaternary structure, PSII is composed of 1 copy each of membrane proteins PsbA, PsbB, PsbC, PsbD, PsbE, PsbF, PsbH, PsbI, PsbJ, PsbK, PsbL, PsbM, PsbT, PsbX, PsbY, PsbZ, Psb30/Ycf12, peripheral proteins of the oxygen-evolving complex and a large number of cofactors. It forms dimeric complexes.

The protein resides in the plastid. The protein localises to the chloroplast thylakoid membrane. In terms of biological role, a core subunit of photosystem II (PSII), probably helps stabilize the reaction center. This chain is Photosystem II reaction center protein Psb30, found in Huperzia lucidula (Shining clubmoss).